We begin with the raw amino-acid sequence, 149 residues long: Placenta growth factor (149 aa).

The N-terminal stretch at 1-18 (MPTVRLFTCFLQLLTGLV) is a signal peptide. N33 is a glycosylation site (N-linked (GlcNAc...) asparagine). 3 disulfides stabilise this stretch: C52/C94, C83/C128, and C87/C130. N-linked (GlcNAc...) asparagine glycosylation is present at N101.

The protein belongs to the PDGF/VEGF growth factor family. In terms of assembly, antiparallel homodimer; disulfide-linked. Also found as heterodimer with VEGFA/VEGF.

Its subcellular location is the secreted. Growth factor active in angiogenesis and endothelial cell growth, stimulating their proliferation and migration. It binds to the receptor FLT1/VEGFR-1. Also promotes cell tumor growth. The protein is Placenta growth factor (PGF) of Bos taurus (Bovine).